The primary structure comprises 311 residues: Porphobilinogen deaminase (311 aa).

An S-(dipyrrolylmethanemethyl)cysteine modification is found at Cys243.

Belongs to the HMBS family. Monomer. Dipyrromethane is required as a cofactor.

It catalyses the reaction 4 porphobilinogen + H2O = hydroxymethylbilane + 4 NH4(+). It participates in porphyrin-containing compound metabolism; protoporphyrin-IX biosynthesis; coproporphyrinogen-III from 5-aminolevulinate: step 2/4. Functionally, tetrapolymerization of the monopyrrole PBG into the hydroxymethylbilane pre-uroporphyrinogen in several discrete steps. In Aliivibrio salmonicida (strain LFI1238) (Vibrio salmonicida (strain LFI1238)), this protein is Porphobilinogen deaminase.